The chain runs to 695 residues: WIIPFIPLPVPILIGAGLILFPTATKSFRRMWAFQSVLLLSIVMIFSIYLSIQQINSSSFSQYVWSWIINNDFSLDFGYLIDPLTSIMXXLITTVGIMVLIYSDNYMAHDQGYLRFFAYMSFFSTSMLGLVTSSNLIQIYIFWELVGLCSYLLIGFWFTRPVAANACQKAFVTNRVGDFGLLLGILGFYWITGSFEFRDLFEIFNNLIYNNEVNFLFVTLCAVLLFVGAVAKSAQFPLHVWLPDAMEGPTPISALIHAATMVAAGIFLVARLLPLFRVIPYIMYLISIIGIITVLLGATLALAQKDIKRGLAYSTMSQLGYMMLALGMGSYRSALFHLITHAYSKALLFLGSGSIIHSMETIVGYSPAKSQNMGLMGGLRKHVPITKITFLLGTLSLCGIPPLACFWSKDEILNDSWLYSPIFAIIAWATAGLTAFYMFRIYLLTFEGHLNVHFQNYGGKHKTPFYSISLWGKNGIKKNSCLLTMNNNESTYFFSKTKYPIDKNERKMTRPFMTIAHFERKAVYSYPYESDNTMLFPIFVLGLFTLFVGSIGIPFNQDGVNLDILSKWLAPSINLLHQKSNNSMDWNEFLKDAVLSVSIAYFGIFIASFLYKPIYSSLKNLELINFFVKKGPKRILWDKIINGIYDWSYNRAYIDAFYTRFLVGGIRGLAEFTHFFDRRVIDGMTNGVGVISFIV.

15 helical membrane passes run 1–21 (WIIP…LILF), 32–52 (WAFQ…YLSI), 81–101 (IDPL…MVLI), 117–137 (FAYM…SNLI), 139–159 (IYIF…FWFT), 177–197 (GDFG…SFEF), 211–231 (NEVN…GAVA), 250–270 (TPIS…FLVA), 278–298 (VIPY…LLGA), 319–339 (LGYM…FHLI), 346–366 (ALLF…VGYS), 388–408 (ITFL…CFWS), 417–437 (WLYS…TAFY), 535–555 (LFPI…GIPF), and 594–614 (VLSV…YKPI).

This sequence belongs to the complex I subunit 5 family. In terms of assembly, NDH is composed of at least 16 different subunits, 5 of which are encoded in the nucleus.

The protein resides in the plastid. It localises to the chloroplast thylakoid membrane. The catalysed reaction is a plastoquinone + NADH + (n+1) H(+)(in) = a plastoquinol + NAD(+) + n H(+)(out). It carries out the reaction a plastoquinone + NADPH + (n+1) H(+)(in) = a plastoquinol + NADP(+) + n H(+)(out). Functionally, NDH shuttles electrons from NAD(P)H:plastoquinone, via FMN and iron-sulfur (Fe-S) centers, to quinones in the photosynthetic chain and possibly in a chloroplast respiratory chain. The immediate electron acceptor for the enzyme in this species is believed to be plastoquinone. Couples the redox reaction to proton translocation, and thus conserves the redox energy in a proton gradient. The chain is NAD(P)H-quinone oxidoreductase subunit 5, chloroplastic (ndhF) from Capsicum baccatum (Peruvian pepper).